The chain runs to 427 residues: Homeobox protein knotted-1-like 3 (427 aa).

2 disordered regions span residues 19–49 and 272–291; these read QTHH…QPAP and TGVS…EDDQ. Polar residues predominate over residues 272-284; sequence TGVSPGEGTSATM. Positions 330–350 constitute an ELK domain; that stretch reads ELKHELKQGYKEKIVDIREEI. The segment at residues 351–414 is a DNA-binding region (homeobox; TALE-type); sequence LRKRRAGKLP…NQRKRNWHSN (64 aa).

This sequence belongs to the TALE/KNOX homeobox family. Maximally expressed in sepals, petals and fully expanded leaves. Also expressed in other flower organs and in developing leaves. Low level expression in stem internodes.

Its subcellular location is the nucleus. The protein is Homeobox protein knotted-1-like 3 of Malus domestica (Apple).